The primary structure comprises 363 residues: Ribosomal RNA large subunit methyltransferase M (363 aa).

S-adenosyl-L-methionine-binding positions include Ser190, 223–226 (CPGG), Asp242, Asp262, and Asp279. Lys308 acts as the Proton acceptor in catalysis.

It belongs to the class I-like SAM-binding methyltransferase superfamily. RNA methyltransferase RlmE family. RlmM subfamily. In terms of assembly, monomer.

The protein localises to the cytoplasm. The catalysed reaction is cytidine(2498) in 23S rRNA + S-adenosyl-L-methionine = 2'-O-methylcytidine(2498) in 23S rRNA + S-adenosyl-L-homocysteine + H(+). In terms of biological role, catalyzes the 2'-O-methylation at nucleotide C2498 in 23S rRNA. The polypeptide is Ribosomal RNA large subunit methyltransferase M (Aliivibrio salmonicida (strain LFI1238) (Vibrio salmonicida (strain LFI1238))).